The chain runs to 346 residues: NADH-ubiquinone oxidoreductase chain 2 (346 aa).

10 consecutive transmembrane segments (helical) span residues 25–45 (HWIL…PLIS), 52–72 (AIEA…LILF), 95–115 (CLIL…HFWF), 124–144 (LITA…LLLM), 149–169 (LNPA…GWMG), 178–196 (ILAF…IIIY), 200–219 (LTIL…FLSL), 247–267 (TLLS…WLII), 274–294 (EMTP…FFYL), and 326–346 (AILT…TTLV).

It belongs to the complex I subunit 2 family.

Its subcellular location is the mitochondrion inner membrane. It carries out the reaction a ubiquinone + NADH + 5 H(+)(in) = a ubiquinol + NAD(+) + 4 H(+)(out). Its function is as follows. Core subunit of the mitochondrial membrane respiratory chain NADH dehydrogenase (Complex I) that is believed to belong to the minimal assembly required for catalysis. Complex I functions in the transfer of electrons from NADH to the respiratory chain. The immediate electron acceptor for the enzyme is believed to be ubiquinone. In Coturnix japonica (Japanese quail), this protein is NADH-ubiquinone oxidoreductase chain 2 (MT-ND2).